The sequence spans 170 residues: Dual-action ribosomal maturation protein DarP (170 aa).

The protein belongs to the DarP family.

It is found in the cytoplasm. Functionally, member of a network of 50S ribosomal subunit biogenesis factors which assembles along the 30S-50S interface, preventing incorrect 23S rRNA structures from forming. Promotes peptidyl transferase center (PTC) maturation. The sequence is that of Dual-action ribosomal maturation protein DarP from Neisseria meningitidis serogroup A / serotype 4A (strain DSM 15465 / Z2491).